Here is a 284-residue protein sequence, read N- to C-terminus: 2-dehydro-3-deoxyphosphooctonate aldolase (284 aa).

This sequence belongs to the KdsA family.

The protein localises to the cytoplasm. It carries out the reaction D-arabinose 5-phosphate + phosphoenolpyruvate + H2O = 3-deoxy-alpha-D-manno-2-octulosonate-8-phosphate + phosphate. It functions in the pathway carbohydrate biosynthesis; 3-deoxy-D-manno-octulosonate biosynthesis; 3-deoxy-D-manno-octulosonate from D-ribulose 5-phosphate: step 2/3. Its pathway is bacterial outer membrane biogenesis; lipopolysaccharide biosynthesis. This chain is 2-dehydro-3-deoxyphosphooctonate aldolase, found in Aliivibrio salmonicida (strain LFI1238) (Vibrio salmonicida (strain LFI1238)).